Here is a 55-residue protein sequence, read N- to C-terminus: Protein CADMIUM TOLERANCE 1 (55 aa).

The helical transmembrane segment at 24–40 (GCLYACIFTALCCFCCY) threads the bilayer.

It belongs to the CYSTM1 family. As to expression, expressed in roots and shoots.

It localises to the cell membrane. The protein localises to the secreted. The protein resides in the cell wall. In terms of biological role, confers resistance to heavy metal ions (e.g. cadmium (CdCl(2)) and copper (CuCl(2))) by chelating them at the plasma membrane of root cells, thus stopping their entry and reducing their accumulation. Binds to aluminium (Al). This Oryza sativa subsp. japonica (Rice) protein is Protein CADMIUM TOLERANCE 1.